Consider the following 439-residue polypeptide: Damage-control phosphatase ARMT1 (439 aa).

Alanine 2 bears the N-acetylalanine mark. A Phosphoserine modification is found at serine 4. Lysine 40 carries the post-translational modification N6-acetyllysine. Positions 251 and 252 each coordinate Mn(2+). 251 to 252 (DN) is a binding site for substrate. S-adenosyl-L-methionine is bound by residues glutamate 256 and aspartate 289. Residue aspartate 289 coordinates Mn(2+). Substrate-binding positions include 365 to 369 (DLNYR) and lysine 402. Positions 399–402 (RTLK) match the Subfamily III RTxK motif motif.

It belongs to the damage-control phosphatase family. Sugar phosphate phosphatase III subfamily. Mn(2+) is required as a cofactor. Ni(2+) serves as cofactor. Automethylated.

The enzyme catalyses beta-D-fructose 1-phosphate + H2O = D-fructose + phosphate. The catalysed reaction is beta-D-fructose 6-phosphate = dihydroxyacetone + D-glyceraldehyde 3-phosphate. It catalyses the reaction L-glutamyl-[protein] + S-adenosyl-L-methionine = [protein]-L-glutamate 5-O-methyl ester + S-adenosyl-L-homocysteine. Its function is as follows. Metal-dependent phosphatase that shows phosphatase activity against several substrates, including fructose-1-phosphate and fructose-6-phosphate. Its preference for fructose-1-phosphate, a strong glycating agent that causes DNA damage rather than a canonical yeast metabolite, suggests a damage-control function in hexose phosphate metabolism. Has also been shown to have O-methyltransferase activity that methylates glutamate residues of target proteins to form gamma-glutamyl methyl ester residues. Possibly methylates PCNA, suggesting it is involved in the DNA damage response. This Rattus norvegicus (Rat) protein is Damage-control phosphatase ARMT1.